Consider the following 695-residue polypeptide: Frizzled and smoothened-like protein O (695 aa).

A signal peptide spans 1-23 (MKKLNYLLIVSFIFILNLLISKS). The Extracellular segment spans residues 24–233 (QVLIDVTAKC…KEYKTKFYSE (210 aa)). The region spanning 28 to 173 (DVTAKCELID…ANEEIQCSGP (146 aa)) is the FZ domain. Intrachain disulfides connect Cys33–Cys96, Cys42–Cys89, Cys80–Cys125, Cys114–Cys170, and Cys118–Cys138. The N-linked (GlcNAc...) asparagine glycan is linked to Asn47. Residues Asn137 and Asn178 are each glycosylated (N-linked (GlcNAc...) asparagine). A helical membrane pass occupies residues 234-254 (AILFSFSTACSFYLIFTFGVF). Residues 255 to 262 (PNKYTNRN) are Cytoplasmic-facing. A helical membrane pass occupies residues 263–283 (WIIVYLGITAICLAISYAVQE). The Extracellular segment spans residues 284–307 (ARYGGGDWRCTSDPGRYKSSEDGT). Residues 308–328 (CILGGFFFQIGGLGTILFLSL) form a helical membrane-spanning segment. Over 329–343 (YSFDMFLTMNMMTNK) the chain is Cytoplasmic. The helical transmembrane segment at 344–364 (YFIQTSVGMWALIIFYALLPI) threads the bilayer. Over 365–387 (KHYESSIASAGCWLSNEDNMFWQ) the chain is Extracellular. The chain crosses the membrane as a helical span at residues 388–408 (YFCFYVPSYVATFFLGVFIIT). Residues 409-435 (SIYKVFKMTVMFKSIKDKRILLLNIRS) are Cytoplasmic-facing. The helical transmembrane segment at 436-456 (IIFLIAIMFCVSFSTMYPLYV) threads the bilayer. The Extracellular segment spans residues 457–500 (TYNGDDFSKSVEVYVTCLYANIPNGNEVCPQIVFPQFSLRYMNA). Residues 501 to 521 (ITMAIIGIVGLIGLGIDPHIL) form a helical membrane-spanning segment. Residues 522 to 695 (QIYRESIRFK…NIERINSDNV (174 aa)) are Cytoplasmic-facing. A compositionally biased stretch (polar residues) spans 545-556 (SPQPLKQGSTTD). The tract at residues 545–695 (SPQPLKQGST…NIERINSDNV (151 aa)) is disordered. A compositionally biased stretch (low complexity) spans 593-608 (NLSASSESSNNLLNQS). Residues 609–625 (TPGNLNINESISSIDTS) are compositionally biased toward polar residues. Residues 626 to 686 (NNNNNNNNNN…NNNNNNNNNN (61 aa)) show a composition bias toward low complexity. Residues 653-691 (NNNNNNNNNNNNNNNNNNNNYSNNNNNNNNNNNNIERIN) adopt a coiled-coil conformation.

This sequence belongs to the G-protein coupled receptor Fz/Smo family.

The protein localises to the membrane. This Dictyostelium discoideum (Social amoeba) protein is Frizzled and smoothened-like protein O (fslO).